The primary structure comprises 234 residues: Enolase-phosphatase E1 (234 aa).

Mg(2+) is bound by residues Asp10 and Glu12. Residues 125–126 (SS) and Lys162 each bind substrate. A Mg(2+)-binding site is contributed by Asp188.

This sequence belongs to the HAD-like hydrolase superfamily. MasA/MtnC family. Monomer. Mg(2+) serves as cofactor.

It is found in the cytoplasm. The protein localises to the nucleus. The enzyme catalyses 5-methylsulfanyl-2,3-dioxopentyl phosphate + H2O = 1,2-dihydroxy-5-(methylsulfanyl)pent-1-en-3-one + phosphate. It functions in the pathway amino-acid biosynthesis; L-methionine biosynthesis via salvage pathway; L-methionine from S-methyl-5-thio-alpha-D-ribose 1-phosphate: step 3/6. Its pathway is amino-acid biosynthesis; L-methionine biosynthesis via salvage pathway; L-methionine from S-methyl-5-thio-alpha-D-ribose 1-phosphate: step 4/6. Functionally, bifunctional enzyme that catalyzes the enolization of 2,3-diketo-5-methylthiopentyl-1-phosphate (DK-MTP-1-P) into the intermediate 2-hydroxy-3-keto-5-methylthiopentenyl-1-phosphate (HK-MTPenyl-1-P), which is then dephosphorylated to form the acireductone 1,2-dihydroxy-3-keto-5-methylthiopentene (DHK-MTPene). This Neurospora crassa (strain ATCC 24698 / 74-OR23-1A / CBS 708.71 / DSM 1257 / FGSC 987) protein is Enolase-phosphatase E1 (utr4).